The following is a 392-amino-acid chain: Imidazolonepropionase (392 aa).

Residues H69 and H71 each contribute to the Fe(3+) site. H69 and H71 together coordinate Zn(2+). 4-imidazolone-5-propanoate is bound by residues R78, Y136, and H163. Y136 serves as a coordination point for N-formimidoyl-L-glutamate. H226 contacts Fe(3+). H226 provides a ligand contact to Zn(2+). Q229 is a binding site for 4-imidazolone-5-propanoate. D302 lines the Fe(3+) pocket. A Zn(2+)-binding site is contributed by D302. Residues N304 and G306 each contribute to the N-formimidoyl-L-glutamate site. Residue S307 participates in 4-imidazolone-5-propanoate binding.

This sequence belongs to the metallo-dependent hydrolases superfamily. HutI family. It depends on Zn(2+) as a cofactor. Fe(3+) serves as cofactor.

It localises to the cytoplasm. The enzyme catalyses 4-imidazolone-5-propanoate + H2O = N-formimidoyl-L-glutamate. It functions in the pathway amino-acid degradation; L-histidine degradation into L-glutamate; N-formimidoyl-L-glutamate from L-histidine: step 3/3. In terms of biological role, catalyzes the hydrolytic cleavage of the carbon-nitrogen bond in imidazolone-5-propanoate to yield N-formimidoyl-L-glutamate. It is the third step in the universal histidine degradation pathway. This is Imidazolonepropionase from Salinispora tropica (strain ATCC BAA-916 / DSM 44818 / JCM 13857 / NBRC 105044 / CNB-440).